A 181-amino-acid polypeptide reads, in one-letter code: Aminoglycoside 2'-N-acetyltransferase (181 aa).

Positions 11–162 constitute an N-acetyltransferase domain; it reads VHTADLDSET…DGTVFVLPID (152 aa). Substrate is bound by residues Asp35 and 82–83; that span reads EG. CoA contacts are provided by residues 84–86 and 91–96; these read VAV and RGQRLV. Residues Ser117 and 151-152 contribute to the substrate site; that span reads DD.

This sequence belongs to the AAC(2')-I acetyltransferase family. Homodimer.

Its function is as follows. Catalyzes the coenzyme A-dependent acetylation of the 2' hydroxyl or amino group of a broad spectrum of aminoglycosides. It confers resistance to aminoglycosides. The sequence is that of Aminoglycoside 2'-N-acetyltransferase (aac) from Mycobacterium bovis (strain ATCC BAA-935 / AF2122/97).